Consider the following 103-residue polypeptide: NADH-ubiquinone oxidoreductase chain 4L (103 aa).

The next 3 membrane-spanning stretches (helical) occupy residues 6–26, 31–51, and 65–85; these read IFFL…GIFI, IIII…NFAI, and ILYT…ILII.

Belongs to the complex I subunit 4L family.

It is found in the mitochondrion membrane. It carries out the reaction a ubiquinone + NADH + 5 H(+)(in) = a ubiquinol + NAD(+) + 4 H(+)(out). Core subunit of the mitochondrial membrane respiratory chain NADH dehydrogenase (Complex I) that is believed to belong to the minimal assembly required for catalysis. Complex I functions in the transfer of electrons from NADH to the respiratory chain. The immediate electron acceptor for the enzyme is believed to be ubiquinone. This chain is NADH-ubiquinone oxidoreductase chain 4L (ND4L), found in Acanthamoeba castellanii (Amoeba).